We begin with the raw amino-acid sequence, 232 residues long: Orotate phosphoribosyltransferase (232 aa).

Lysine 28 contributes to the 5-phospho-alpha-D-ribose 1-diphosphate binding site. An orotate-binding site is contributed by 36–37; sequence FF. Residues 78 to 79, arginine 108, lysine 109, lysine 112, histidine 114, and 134 to 142 contribute to the 5-phospho-alpha-D-ribose 1-diphosphate site; these read YK and DDVITAGTA. Orotate contacts are provided by threonine 138 and arginine 166.

It belongs to the purine/pyrimidine phosphoribosyltransferase family. PyrE subfamily. As to quaternary structure, homodimer.

The enzyme catalyses orotidine 5'-phosphate + diphosphate = orotate + 5-phospho-alpha-D-ribose 1-diphosphate. The protein operates within pyrimidine metabolism; UMP biosynthesis via de novo pathway; UMP from orotate: step 1/2. Its function is as follows. Catalyzes the transfer of a ribosyl phosphate group from 5-phosphoribose 1-diphosphate to orotate, leading to the formation of orotidine monophosphate (OMP). This Sordaria macrospora protein is Orotate phosphoribosyltransferase (URA5).